We begin with the raw amino-acid sequence, 652 residues long: tRNA 5-methylaminomethyl-2-thiouridine biosynthesis bifunctional protein MnmC (652 aa).

The tract at residues 1–235 (MPDRLVPATL…EPALRVGEYA (235 aa)) is tRNA (mnm(5)s(2)U34)-methyltransferase. Residues 259-652 (IGAGLAGCAV…IRALRGRQIG (394 aa)) form an FAD-dependent cmnm(5)s(2)U34 oxidoreductase region.

In the N-terminal section; belongs to the methyltransferase superfamily. tRNA (mnm(5)s(2)U34)-methyltransferase family. It in the C-terminal section; belongs to the DAO family. It depends on FAD as a cofactor.

The protein resides in the cytoplasm. It carries out the reaction 5-aminomethyl-2-thiouridine(34) in tRNA + S-adenosyl-L-methionine = 5-methylaminomethyl-2-thiouridine(34) in tRNA + S-adenosyl-L-homocysteine + H(+). Catalyzes the last two steps in the biosynthesis of 5-methylaminomethyl-2-thiouridine (mnm(5)s(2)U) at the wobble position (U34) in tRNA. Catalyzes the FAD-dependent demodification of cmnm(5)s(2)U34 to nm(5)s(2)U34, followed by the transfer of a methyl group from S-adenosyl-L-methionine to nm(5)s(2)U34, to form mnm(5)s(2)U34. The sequence is that of tRNA 5-methylaminomethyl-2-thiouridine biosynthesis bifunctional protein MnmC from Burkholderia ambifaria (strain ATCC BAA-244 / DSM 16087 / CCUG 44356 / LMG 19182 / AMMD) (Burkholderia cepacia (strain AMMD)).